The sequence spans 172 residues: MAKMQAKVQADERDDGLREKMISVNRVTKVVKGGRILGFAALTVVGDGDGRIGMGKGKAKEVPVAVQKAMEQARRNMFKVPLKNGTLQHEVHGKHGASAVLLAPAKDGTGVIAGGPMRAVFDVMGVQNVVAKSHGSTNPYNLVRATLDGLRKQSTPGDIAAKRGKSVEDILG.

In terms of domain architecture, S5 DRBM spans 17-80 (LREKMISVNR…EQARRNMFKV (64 aa)).

Belongs to the universal ribosomal protein uS5 family. In terms of assembly, part of the 30S ribosomal subunit. Contacts proteins S4 and S8.

In terms of biological role, with S4 and S12 plays an important role in translational accuracy. Located at the back of the 30S subunit body where it stabilizes the conformation of the head with respect to the body. This chain is Small ribosomal subunit protein uS5, found in Paraburkholderia xenovorans (strain LB400).